We begin with the raw amino-acid sequence, 133 residues long: Small ribosomal subunit protein uS11 (133 aa).

The protein belongs to the universal ribosomal protein uS11 family. As to quaternary structure, part of the 30S ribosomal subunit.

Functionally, located on the platform of the 30S subunit. The protein is Small ribosomal subunit protein uS11 of Pyrobaculum aerophilum (strain ATCC 51768 / DSM 7523 / JCM 9630 / CIP 104966 / NBRC 100827 / IM2).